The following is a 301-amino-acid chain: MSAAAAETDVSLRRRSNSLNGNHTNGVAIDGTLDNNNRRVGDTNTHMDISAKKTDNGYANGVGGGGWRSKASFTTWTARDIVYVVRYHWIPCMFAAGLLFFMGVEYTLQMIPARSEPFDLGFVVTRSLNRVLASSPDLNTVLAALNTVFVGMQTTYIVWTWLVEGRARATIAALFMFTCRGILGYSTQLPLPQDFLGSGVDFPVGNVSFFLFFSGHVAGSMIASLDMRRMQRLRLAMVFDILNVLQSIRLLGTRGHYTIDLAVGVGAGILFDSLAGKYEEMMSKRHLGTGFSLISKDSLVN.

Positions 1 to 39 are disordered; sequence MSAAAAETDVSLRRRSNSLNGNHTNGVAIDGTLDNNNRR. The next 5 helical transmembrane spans lie at 88-108, 141-161, 171-191, 202-222, and 255-275; these read HWIPCMFAAGLLFFMGVEYTL, VLAALNTVFVGMQTTYIVWTW, IAALFMFTCRGILGYSTQLPL, FPVGNVSFFLFFSGHVAGSMI, and GHYTIDLAVGVGAGILFDSLA. Residues H216, H256, and D260 contribute to the active site.

Belongs to the phosphatidylcholine:diacylglycerol cholinephosphotransferase family.

The protein localises to the membrane. It catalyses the reaction 1,2-ditetradecanoyl-sn-glycero-3-phosphocholine + 1,2-di-(9Z-octadecenoyl)-sn-glycerol = 1,2-ditetradecanoyl-sn-glycerol + 1,2-di-(9Z-octadecenoyl)-sn-glycero-3-phosphocholine. Functionally, functions as a phosphatidylcholine:diacylglycerol cholinephosphotransferase that catalyzes the transfer of the phosphocholine headgroup from phosphatidylcholine (PC) to diacylglycerol, a major reaction for the transfer of 18:1 into phosphatidylcholine for desaturation and also for the reverse transfer of 18:2 and 18:3 into the triacylglycerols synthesis pathway. This chain is Phosphatidylcholine:diacylglycerol cholinephosphotransferase 1, found in Arabidopsis thaliana (Mouse-ear cress).